The sequence spans 679 residues: Shutoff protein (679 aa).

The tract at residues 178–232 is binding to host EIF4G; that stretch reads LFDYLIGESQDPNDLDSEYKLAFTDEDLPQEGQAEKTKQRETLGAVATFGAVLLS. In terms of domain architecture, RRM spans 235-353; it reads RLFTHPVVIK…ELAGANYAEA (119 aa). Phosphotyrosine; by host occurs at positions 252 and 564. Positions 552–679 are disordered; that stretch reads REKSILKRGG…SLQGTRRESS (128 aa). Residues 661–679 show a composition bias toward basic and acidic residues; it reads PRQETAEKESLQGTRRESS.

It belongs to the adenoviridae shutoff protein family. In terms of assembly, monomer. Interacts with hexon protein; this interaction allows chaperoning and trimerization of hexon proteins. Interacts (via N-terminus) with host initiation factor EIF4G (via C-terminus). Interacts (via RRM domain) with viral mRNAs that contain the tripartite leader; this interaction allows ribosome shunting and expression of viral late mRNAs. Might be cleaved by the viral protease. In terms of processing, phosphorylated. Tyrosine phosphorylation enhances preferential binding to tripartite leader mRNAs and allows ribosome shunting. Post-translationally, methylated. Asymmetric dimethylation by host PRMT1 of the Arg/Gly-rich region may regulate shutoff protein binding to hexon and promote the capsid assembly in the nucleus.

Its subcellular location is the host cytoplasm. In terms of biological role, protein that inhibits host translation while promoting late viral translation by ribosome shunting. Blocks host cap-dependent translation by binding to eIF4G, displacing MKNK1 from cap initiation complexes and preventing EIF4E phosphorylation. Binds to the tripartite leader sequence of viral late mRNAs and recruits host eIF4G, PABPC1/poly-A binding protein and 40S ribosomes subunits on viral mRNAs, allowing ribosome shunting and efficient translation of late viral mRNAs even though conventional translation via ribosome scanning from the cap has been shut off in the host cell. During assembly, acts as a chaperone protein that helps hexon proteins assembly into trimers. The sequence is that of Shutoff protein from Snake adenovirus serotype 1 (SnAdV-1).